A 244-amino-acid chain; its full sequence is MVELPFQQSQALNVRQNRALALAGVFQATQLTHMTAMTGQQSIGESGNFYFELLIKASLNIRPTTNNNTVQTLDFFNQLADISLGLKTLENCITQPFSNAPKSRLPKMRSAKLPMSYAMSLLQLEKKVYSNPEYVAIIEKAQQKILKQLSFFDNNYLHPSILANLAQTYVDTAGQINPRILVRGNAEAFKDTNHTNRIRACLFTGLQMAHLWRQLGGSSWNMIFSKRKLLQDIQALARLQYQVI.

The protein belongs to the HflD family.

Its subcellular location is the cytoplasm. It localises to the cell inner membrane. The polypeptide is High frequency lysogenization protein HflD homolog (Acinetobacter baumannii (strain ATCC 17978 / DSM 105126 / CIP 53.77 / LMG 1025 / NCDC KC755 / 5377)).